We begin with the raw amino-acid sequence, 154 residues long: 3-hydroxyacyl-[acyl-carrier-protein] dehydratase FabZ (154 aa).

His-59 is a catalytic residue.

It belongs to the thioester dehydratase family. FabZ subfamily.

Its subcellular location is the cytoplasm. It catalyses the reaction a (3R)-hydroxyacyl-[ACP] = a (2E)-enoyl-[ACP] + H2O. Its function is as follows. Involved in unsaturated fatty acids biosynthesis. Catalyzes the dehydration of short chain beta-hydroxyacyl-ACPs and long chain saturated and unsaturated beta-hydroxyacyl-ACPs. The protein is 3-hydroxyacyl-[acyl-carrier-protein] dehydratase FabZ of Bartonella bacilliformis (strain ATCC 35685 / KC583 / Herrer 020/F12,63).